A 159-amino-acid polypeptide reads, in one-letter code: Nucleotide-binding protein Psyr_4087 (159 aa).

The protein belongs to the YajQ family.

Functionally, nucleotide-binding protein. In Pseudomonas syringae pv. syringae (strain B728a), this protein is Nucleotide-binding protein Psyr_4087.